The chain runs to 227 residues: Glutathione S-transferase U7 (227 aa).

Residues 8–87 form the GST N-terminal domain; sequence EEVKLLGMWA…YIDETWRDNP (80 aa). Glutathione-binding positions include 18 to 19, 44 to 45, 58 to 59, and 71 to 72; these read SP, NK, MI, and ES. Residues 92 to 215 enclose the GST C-terminal domain; sequence DPYERTMARF…PPEDEHLKYI (124 aa).

This sequence belongs to the GST superfamily. Tau family.

Its subcellular location is the cytoplasm. It is found in the cytosol. The enzyme catalyses RX + glutathione = an S-substituted glutathione + a halide anion + H(+). Functionally, may be involved in the conjugation of reduced glutathione to a wide number of exogenous and endogenous hydrophobic electrophiles and have a detoxification role against certain herbicides. This is Glutathione S-transferase U7 (GSTU7) from Arabidopsis thaliana (Mouse-ear cress).